The primary structure comprises 218 residues: Small ribosomal subunit protein uS3c (218 aa).

The region spanning 39 to 109 (IRNYVKVNLS…QIRINVTELK (71 aa)) is the KH type-2 domain.

This sequence belongs to the universal ribosomal protein uS3 family. In terms of assembly, part of the 30S ribosomal subunit.

It localises to the plastid. The protein resides in the chloroplast. The chain is Small ribosomal subunit protein uS3c (rps3) from Rhodomonas salina (Cryptomonas salina).